Consider the following 95-residue polypeptide: Pyrimidine/purine nucleoside phosphorylase (95 aa).

Belongs to the nucleoside phosphorylase PpnP family.

It carries out the reaction a purine D-ribonucleoside + phosphate = a purine nucleobase + alpha-D-ribose 1-phosphate. It catalyses the reaction adenosine + phosphate = alpha-D-ribose 1-phosphate + adenine. The enzyme catalyses cytidine + phosphate = cytosine + alpha-D-ribose 1-phosphate. The catalysed reaction is guanosine + phosphate = alpha-D-ribose 1-phosphate + guanine. It carries out the reaction inosine + phosphate = alpha-D-ribose 1-phosphate + hypoxanthine. It catalyses the reaction thymidine + phosphate = 2-deoxy-alpha-D-ribose 1-phosphate + thymine. The enzyme catalyses uridine + phosphate = alpha-D-ribose 1-phosphate + uracil. The catalysed reaction is xanthosine + phosphate = alpha-D-ribose 1-phosphate + xanthine. Functionally, catalyzes the phosphorolysis of diverse nucleosides, yielding D-ribose 1-phosphate and the respective free bases. Can use uridine, adenosine, guanosine, cytidine, thymidine, inosine and xanthosine as substrates. Also catalyzes the reverse reactions. In Yersinia enterocolitica serotype O:8 / biotype 1B (strain NCTC 13174 / 8081), this protein is Pyrimidine/purine nucleoside phosphorylase.